The primary structure comprises 925 residues: Centrosomal protein of 104 kDa (925 aa).

The stretch at 209 to 289 (EVAQIIRKLD…RAEVYEQLEL (81 aa)) forms a coiled coil. HEAT repeat units follow at residues 529–567 (TIPV…LQII) and 604–640 (GFTI…YRQH). A coiled-coil region spans residues 677–725 (DAEMRARRKAATEEAEKQKKEEIKALQGQLAALKEIQAEVQEKESDAVK). The interval 883 to 925 (PALQPGKSSAVAASGPLGSKAGSKIPTPKGGLSKSSSRTYAKR) is disordered. Residues 915–925 (SKSSSRTYAKR) show a composition bias toward polar residues.

As to quaternary structure, interacts with CCP110 and CEP97. Interacts with ARMC9, TOGARAM1, CCDC66 and CSPP1.

It localises to the cell projection. Its subcellular location is the cilium. It is found in the cytoplasm. The protein localises to the cytoskeleton. The protein resides in the microtubule organizing center. It localises to the centrosome. Its subcellular location is the centriole. It is found in the spindle pole. Functionally, required for ciliogenesis and for structural integrity at the ciliary tip. The chain is Centrosomal protein of 104 kDa (CEP104) from Homo sapiens (Human).